A 322-amino-acid chain; its full sequence is Homeobox protein DBX1-B (322 aa).

The homeobox DNA-binding region spans 179–238 (GMLRRAVFSDVQRKALEKMFQKQKYISKPDRKKLATKLGLKDSQVKIWFQNRRMKWRNSK). Disordered stretches follow at residues 238-266 (KERE…LSDV) and 296-322 (DLHF…ITVS). Residues 312 to 322 (SESEDEEITVS) are compositionally biased toward acidic residues.

This sequence belongs to the H2.0 homeobox family.

It localises to the nucleus. In Danio rerio (Zebrafish), this protein is Homeobox protein DBX1-B (dbx1b).